An 87-amino-acid polypeptide reads, in one-letter code: Conotoxin Ca6.2 (87 aa).

The first 19 residues, 1–19 (MHTLEMLLLVLLLVPLAPG), serve as a signal peptide directing secretion. Positions 20-52 (EGDGQAVGGDRNPSEARRAYKRLLQRPARRMDR) are excised as a propeptide. 3 cysteine pairs are disulfide-bonded: cysteine 55/cysteine 64, cysteine 58/cysteine 70, and cysteine 63/cysteine 84.

It belongs to the conotoxin Q superfamily. As to expression, expressed by the venom duct.

It localises to the secreted. The polypeptide is Conotoxin Ca6.2 (Conus caracteristicus (Characteristic cone)).